We begin with the raw amino-acid sequence, 326 residues long: Beta-ketoacyl-[acyl-carrier-protein] synthase III (326 aa).

Catalysis depends on residues Cys120 and His253. The ACP-binding stretch occupies residues 254 to 258; it reads QANIR. The active site involves Asn283.

Belongs to the thiolase-like superfamily. FabH family. As to quaternary structure, homodimer.

Its subcellular location is the cytoplasm. It carries out the reaction malonyl-[ACP] + acetyl-CoA + H(+) = 3-oxobutanoyl-[ACP] + CO2 + CoA. It functions in the pathway lipid metabolism; fatty acid biosynthesis. In terms of biological role, catalyzes the condensation reaction of fatty acid synthesis by the addition to an acyl acceptor of two carbons from malonyl-ACP. Catalyzes the first condensation reaction which initiates fatty acid synthesis and may therefore play a role in governing the total rate of fatty acid production. Possesses both acetoacetyl-ACP synthase and acetyl transacylase activities. Its substrate specificity determines the biosynthesis of branched-chain and/or straight-chain of fatty acids. The sequence is that of Beta-ketoacyl-[acyl-carrier-protein] synthase III from Cupriavidus taiwanensis (strain DSM 17343 / BCRC 17206 / CCUG 44338 / CIP 107171 / LMG 19424 / R1) (Ralstonia taiwanensis (strain LMG 19424)).